The following is a 553-amino-acid chain: Chaperonin GroEL (553 aa).

Residues 29 to 32, K50, 86 to 90, G424, and D504 each bind ATP; these read TLGP and DGTTT.

It belongs to the chaperonin (HSP60) family. In terms of assembly, forms a cylinder of 14 subunits composed of two heptameric rings stacked back-to-back. Interacts with the co-chaperonin GroES.

It is found in the cytoplasm. It catalyses the reaction ATP + H2O + a folded polypeptide = ADP + phosphate + an unfolded polypeptide.. Functionally, together with its co-chaperonin GroES, plays an essential role in assisting protein folding. The GroEL-GroES system forms a nano-cage that allows encapsulation of the non-native substrate proteins and provides a physical environment optimized to promote and accelerate protein folding. The sequence is that of Chaperonin GroEL from Koribacter versatilis (strain Ellin345).